A 237-amino-acid chain; its full sequence is Ribosomal RNA small subunit methyltransferase G (237 aa).

S-adenosyl-L-methionine contacts are provided by residues Gly-78, Phe-83, 129-130 (AE), and Arg-148.

Belongs to the methyltransferase superfamily. RNA methyltransferase RsmG family.

The protein resides in the cytoplasm. Its function is as follows. Specifically methylates the N7 position of a guanine in 16S rRNA. In Streptococcus equi subsp. zooepidemicus (strain H70), this protein is Ribosomal RNA small subunit methyltransferase G.